Reading from the N-terminus, the 78-residue chain is MPRIYKIVGDTTTGMKFRIEVVAEKPYDAIEKAYSLIGSRHKLSRMQIRIREVVPISPEEARSEHVKILMAVDKIYKY.

Belongs to the eukaryotic ribosomal protein eL20 family. In terms of assembly, part of the 50S ribosomal subunit. Binds 23S rRNA.

This Pyrobaculum arsenaticum (strain DSM 13514 / JCM 11321 / PZ6) protein is Large ribosomal subunit protein eL20.